The sequence spans 76 residues: Exodeoxyribonuclease 7 small subunit (76 aa).

Belongs to the XseB family. As to quaternary structure, heterooligomer composed of large and small subunits.

The protein localises to the cytoplasm. It catalyses the reaction Exonucleolytic cleavage in either 5'- to 3'- or 3'- to 5'-direction to yield nucleoside 5'-phosphates.. Bidirectionally degrades single-stranded DNA into large acid-insoluble oligonucleotides, which are then degraded further into small acid-soluble oligonucleotides. This is Exodeoxyribonuclease 7 small subunit from Bacillus mycoides (strain KBAB4) (Bacillus weihenstephanensis).